We begin with the raw amino-acid sequence, 401 residues long: Decapping and exoribonuclease protein (401 aa).

Positions 1–27 (MEGNKSMQREKIDRPMKRGPEQNSLSP) are disordered. Over residues 7–20 (MQREKIDRPMKRGP) the composition is skewed to basic and acidic residues. Residues arginine 69, glutamate 114, and 149 to 151 (WRG) each bind substrate. Glutamate 210 serves as a coordination point for Mg(2+). Positions 235 and 252 each coordinate substrate. Glutamate 252, aspartate 254, glutamate 271, and leucine 272 together coordinate Mg(2+). 2 residues coordinate substrate: lysine 273 and glutamine 298.

Belongs to the DXO/Dom3Z family. Mg(2+) serves as cofactor.

The protein resides in the nucleus. It carries out the reaction a 5'-end triphospho-ribonucleoside in mRNA + H2O = a 5'-end phospho-ribonucleoside in mRNA + diphosphate + H(+). The enzyme catalyses a 5'-end NAD(+)-phospho-ribonucleoside in mRNA + H2O = a 5'-end phospho-ribonucleoside in mRNA + NAD(+) + H(+). The catalysed reaction is a 5'-end NAD(+)-phospho-ribonucleoside in snoRNA + H2O = a 5'-end phospho-ribonucleoside in snoRNA + NAD(+) + H(+). It catalyses the reaction a 5'-end (N(7)-methyl 5'-triphosphoguanosine)-ribonucleoside-ribonucleotide in mRNA + H2O = a (N(7)-methyl 5'-triphosphoguanosine)-nucleoside + a 5'-end phospho-ribonucleoside in mRNA + H(+). It carries out the reaction a 5'-end FAD-phospho-ribonucleoside in mRNA + H2O = a 5'-end phospho-ribonucleoside in mRNA + FAD + H(+). The enzyme catalyses a 5'-end CoA-ribonucleoside in mRNA + H2O = 3'-dephospho-CoA + a 5'-end phospho-ribonucleoside in mRNA + H(+). In terms of biological role, decapping enzyme for NAD-capped RNAs: specifically hydrolyzes the nicotinamide adenine dinucleotide (NAD) cap from a subset of RNAs by removing the entire NAD moiety from the 5'-end of an NAD-capped RNA. The NAD-cap is present at the 5'-end of some RNAs and snoRNAs. In contrast to the canonical 5'-end N7 methylguanosine (m7G) cap, the NAD cap promotes mRNA decay. Also acts as a non-canonical decapping enzyme that removes the entire cap structure of m7G capped or incompletely capped RNAs and mediates their subsequent degradation. Specifically degrades pre-mRNAs with a defective 5'-end m7G cap and is part of a pre-mRNA capping quality control. Has decapping activity toward incomplete 5'-end m7G cap mRNAs such as unmethylated 5'-end-capped RNA (cap0), while it has no activity toward 2'-O-ribose methylated m7G cap (cap1). Also has 5'-3' exoribonuclease activities: The 5'-end monophosphate RNA is then degraded by the 5'-3' exoribonuclease activity, enabling this enzyme to decap and degrade incompletely capped mRNAs. Also possesses RNA 5'-pyrophosphohydrolase activity by hydrolyzing the 5'-end triphosphate to release pyrophosphates. Exhibits decapping activity towards FAD-capped RNAs. Exhibits decapping activity towards dpCoA-capped RNAs in vitro. This Xenopus laevis (African clawed frog) protein is Decapping and exoribonuclease protein.